We begin with the raw amino-acid sequence, 269 residues long: Microtubule-associated protein RP/EB family member 1 (269 aa).

Positions 14–116 constitute a Calponin-homology (CH) domain; sequence NLSRHDMLAW…FVQWFKKFFD (103 aa). The disordered stretch occupies residues 168 to 190; it reads RTAVSNKPPAQGISKKPATVGNG. The EB1 C-terminal domain occupies 186–256; sequence TVGNGDDESA…LYATDEGFVI (71 aa).

It belongs to the MAPRE family.

The protein resides in the cytoplasm. The protein localises to the cytoskeleton. It is found in the microtubule organizing center. It localises to the centrosome. Its subcellular location is the golgi apparatus. The protein resides in the spindle. The protein localises to the spindle pole. Functionally, plus-end tracking protein (+TIP) that binds to the plus-end of microtubules and regulates the dynamics of the microtubule cytoskeleton. Promotes cytoplasmic microtubule nucleation and elongation. Involved in mitotic spindle positioning by stabilizing microtubules and promoting dynamic connection between astral microtubules and the cortex during mitotic chromosome segregation. The polypeptide is Microtubule-associated protein RP/EB family member 1 (mapre1) (Xenopus tropicalis (Western clawed frog)).